A 392-amino-acid polypeptide reads, in one-letter code: Methylthioribose-1-phosphate isomerase (392 aa).

Catalysis depends on Asp-268, which acts as the Proton donor.

It belongs to the eIF-2B alpha/beta/delta subunits family. MtnA subfamily.

The protein localises to the cytoplasm. Its subcellular location is the nucleus. It catalyses the reaction 5-(methylsulfanyl)-alpha-D-ribose 1-phosphate = 5-(methylsulfanyl)-D-ribulose 1-phosphate. Its pathway is amino-acid biosynthesis; L-methionine biosynthesis via salvage pathway; L-methionine from S-methyl-5-thio-alpha-D-ribose 1-phosphate: step 1/6. Catalyzes the interconversion of methylthioribose-1-phosphate (MTR-1-P) into methylthioribulose-1-phosphate (MTRu-1-P). This is Methylthioribose-1-phosphate isomerase from Ajellomyces capsulatus (strain G186AR / H82 / ATCC MYA-2454 / RMSCC 2432) (Darling's disease fungus).